A 406-amino-acid chain; its full sequence is Arginine biosynthesis bifunctional protein ArgJ (406 aa).

Substrate is bound by residues threonine 154, lysine 180, threonine 191, glutamate 278, asparagine 401, and threonine 406. Threonine 191 acts as the Nucleophile in catalysis.

This sequence belongs to the ArgJ family. Heterotetramer of two alpha and two beta chains.

It is found in the cytoplasm. It catalyses the reaction N(2)-acetyl-L-ornithine + L-glutamate = N-acetyl-L-glutamate + L-ornithine. The enzyme catalyses L-glutamate + acetyl-CoA = N-acetyl-L-glutamate + CoA + H(+). The protein operates within amino-acid biosynthesis; L-arginine biosynthesis; L-ornithine and N-acetyl-L-glutamate from L-glutamate and N(2)-acetyl-L-ornithine (cyclic): step 1/1. It functions in the pathway amino-acid biosynthesis; L-arginine biosynthesis; N(2)-acetyl-L-ornithine from L-glutamate: step 1/4. Its function is as follows. Catalyzes two activities which are involved in the cyclic version of arginine biosynthesis: the synthesis of N-acetylglutamate from glutamate and acetyl-CoA as the acetyl donor, and of ornithine by transacetylation between N(2)-acetylornithine and glutamate. The polypeptide is Arginine biosynthesis bifunctional protein ArgJ (Gloeobacter violaceus (strain ATCC 29082 / PCC 7421)).